A 747-amino-acid chain; its full sequence is Catalase-peroxidase 1 (747 aa).

Basic and acidic residues predominate over residues M1–S22. Residues M1 to T39 form a disordered region. Residues W112–Y240 constitute a cross-link (tryptophyl-tyrosyl-methioninium (Trp-Tyr) (with M-266)). The active-site Proton acceptor is H113. Residues Y240–M266 constitute a cross-link (tryptophyl-tyrosyl-methioninium (Tyr-Met) (with W-112)). Residue H281 coordinates heme b.

It belongs to the peroxidase family. Peroxidase/catalase subfamily. In terms of assembly, homodimer or homotetramer. It depends on heme b as a cofactor. In terms of processing, formation of the three residue Trp-Tyr-Met cross-link is important for the catalase, but not the peroxidase activity of the enzyme.

The catalysed reaction is H2O2 + AH2 = A + 2 H2O. The enzyme catalyses 2 H2O2 = O2 + 2 H2O. In terms of biological role, bifunctional enzyme with both catalase and broad-spectrum peroxidase activity. This Mycolicibacterium vanbaalenii (strain DSM 7251 / JCM 13017 / BCRC 16820 / KCTC 9966 / NRRL B-24157 / PYR-1) (Mycobacterium vanbaalenii) protein is Catalase-peroxidase 1.